Here is a 318-residue protein sequence, read N- to C-terminus: Taste receptor type 2 member 7 (318 aa).

The Extracellular portion of the chain corresponds to 1 to 9 (MTDKVQTTL). A helical membrane pass occupies residues 10–30 (LFLAVGEFSVGILGNAFIGLV). Residues 31–55 (NCMDWIKKRKIASIDLILTSLAISR) lie on the Cytoplasmic side of the membrane. A helical membrane pass occupies residues 56–76 (ICLLCVILLDCFILVLYPDVY). The Extracellular segment spans residues 77 to 94 (ATGKEMRIIDFFWILTNH). The helical transmembrane segment at 95–115 (LSIWFATCLSIYYFFKIANFF) threads the bilayer. Residues 116 to 128 (HPLFLWMKWRIDR) lie on the Cytoplasmic side of the membrane. The chain crosses the membrane as a helical span at residues 129 to 149 (VISWILLGCMVLSVFISLPAT). The Extracellular portion of the chain corresponds to 150–187 (ENLNADFRFCVKAKRKTNLTWSCRVNKTQHASIKLLLN). Residues asparagine 167 and asparagine 175 are each glycosylated (N-linked (GlcNAc...) asparagine). A helical membrane pass occupies residues 188 to 208 (LATLLPFCVCLMSFFLLILSL). The Cytoplasmic portion of the chain corresponds to 209 to 235 (RRHIRRMQLSATGCRDPSTEAHVRALK). Residues 236–256 (AVISFLLLFIAYYLSFLIATS) form a helical membrane-spanning segment. Residues 257-266 (SYFMPETELA) are Extracellular-facing. The chain crosses the membrane as a helical span at residues 267–287 (VIFGESIALIYPSSHSFILIL). Residues 288–318 (GNNKLRHASLKVIWKVMSILKGRKFQQHKQI) are Cytoplasmic-facing.

The protein belongs to the G-protein coupled receptor T2R family.

It localises to the membrane. Functionally, gustducin-coupled receptor implicated in the perception of bitter compounds in the oral cavity and the gastrointestinal tract. Signals through PLCB2 and the calcium-regulated cation channel TRPM5. This chain is Taste receptor type 2 member 7 (TAS2R7), found in Pongo pygmaeus (Bornean orangutan).